A 730-amino-acid chain; its full sequence is Transcription factor verF (730 aa).

The segment at 19–41 adopts a C2H2-type 1 zinc-finger fold; the sequence is YECSLCLKRYKRREHLFRHIGSH. The C2H2-type 2; atypical zinc-finger motif lies at 47 to 69; that stretch reads YQCNSCDGAFQRADVLKRHLRTC. Residues 83-109 constitute a DNA-binding region (zn(2)-C6 fungal-type); the sequence is CDRCVRQKKACSSHQPCHSCAKKGAQC. Positions 120–129 are enriched in polar residues; the sequence is RLSQHSSTNH. Residues 120–151 are disordered; it reads RLSQHSSTNHTPKDQELSTQFTNPPPPPSTST.

It is found in the nucleus. Its function is as follows. Transcription factor; part of the gene cluster that mediates the biosynthesis of the neurotoxin verrucosidin, a methylated alpha-pyrone polyketide that inhibits oxidative phosphorylation in mitochondria and thereby causes neurological diseases. The polypeptide is Transcription factor verF (Penicillium polonicum).